The chain runs to 299 residues: Oxygen-dependent coproporphyrinogen-III oxidase (299 aa).

Serine 92 serves as a coordination point for substrate. A divalent metal cation contacts are provided by histidine 96 and histidine 106. Histidine 106 serves as the catalytic Proton donor. 108–110 (NVR) is a substrate binding site. A divalent metal cation-binding residues include histidine 145 and histidine 175. An important for dimerization region spans residues 240–275 (YVEFNLVWDRGTLFGLQTGGRTESILMSMPPLVRWE). Residue 258–260 (GGR) coordinates substrate.

It belongs to the aerobic coproporphyrinogen-III oxidase family. In terms of assembly, homodimer. A divalent metal cation is required as a cofactor.

Its subcellular location is the cytoplasm. The enzyme catalyses coproporphyrinogen III + O2 + 2 H(+) = protoporphyrinogen IX + 2 CO2 + 2 H2O. It participates in porphyrin-containing compound metabolism; protoporphyrin-IX biosynthesis; protoporphyrinogen-IX from coproporphyrinogen-III (O2 route): step 1/1. Its function is as follows. Involved in the heme biosynthesis. Catalyzes the aerobic oxidative decarboxylation of propionate groups of rings A and B of coproporphyrinogen-III to yield the vinyl groups in protoporphyrinogen-IX. This chain is Oxygen-dependent coproporphyrinogen-III oxidase, found in Salmonella arizonae (strain ATCC BAA-731 / CDC346-86 / RSK2980).